A 549-amino-acid chain; its full sequence is SET and MYND domain-containing protein DDB_G0277331 (549 aa).

In terms of domain architecture, SET spans 27 to 283; it reads KGIELRYCDG…KDEELFINYS (257 aa). Zn(2+) is bound by residues Cys71, Cys74, Cys90, Cys93, Cys99, Cys103, His111, and Cys115. The MYND-type zinc-finger motif lies at 71 to 115; it reads CDECLKNKLDLEEGKTLKRCSNCKLVYYCSTDCQTKAWKIHKQEC. The stretch at 340–401 forms a coiled coil; sequence NINNNNNNNN…IIKNLQNKLS (62 aa).

It belongs to the class V-like SAM-binding methyltransferase superfamily.

Its function is as follows. Probable methyltransferase. The sequence is that of SET and MYND domain-containing protein DDB_G0277331 from Dictyostelium discoideum (Social amoeba).